Consider the following 465-residue polypeptide: ATP-dependent protease ATPase subunit HslU (465 aa).

ATP contacts are provided by residues valine 18, 60–65 (GVGKTE), aspartate 277, glutamate 342, and arginine 414.

The protein belongs to the ClpX chaperone family. HslU subfamily. As to quaternary structure, a double ring-shaped homohexamer of HslV is capped on each side by a ring-shaped HslU homohexamer. The assembly of the HslU/HslV complex is dependent on binding of ATP.

The protein resides in the cytoplasm. Its function is as follows. ATPase subunit of a proteasome-like degradation complex; this subunit has chaperone activity. The binding of ATP and its subsequent hydrolysis by HslU are essential for unfolding of protein substrates subsequently hydrolyzed by HslV. HslU recognizes the N-terminal part of its protein substrates and unfolds these before they are guided to HslV for hydrolysis. The chain is ATP-dependent protease ATPase subunit HslU from Caldicellulosiruptor saccharolyticus (strain ATCC 43494 / DSM 8903 / Tp8T 6331).